The following is a 272-amino-acid chain: Diaminopimelate epimerase (272 aa).

Residues Asn11 and Asn63 each coordinate substrate. The active-site Proton donor is Cys72. Substrate contacts are provided by residues 73-74, Asn190, and 208-209; these read GN and ER. Residue Cys217 is the Proton acceptor of the active site. Residue 218–219 coordinates substrate; it reads GT.

This sequence belongs to the diaminopimelate epimerase family. As to quaternary structure, homodimer.

The protein resides in the cytoplasm. It catalyses the reaction (2S,6S)-2,6-diaminopimelate = meso-2,6-diaminopimelate. It functions in the pathway amino-acid biosynthesis; L-lysine biosynthesis via DAP pathway; DL-2,6-diaminopimelate from LL-2,6-diaminopimelate: step 1/1. Functionally, catalyzes the stereoinversion of LL-2,6-diaminopimelate (L,L-DAP) to meso-diaminopimelate (meso-DAP), a precursor of L-lysine and an essential component of the bacterial peptidoglycan. The polypeptide is Diaminopimelate epimerase (Clostridium perfringens (strain 13 / Type A)).